The sequence spans 245 residues: Large ribosomal subunit protein uL2 (245 aa).

The disordered stretch occupies residues 198 to 245 (VSHPHGGGSHKRPGKPTTVARTAPPGQKVGHIAARKTGRAKRRAATKR). Over residues 230-245 (AARKTGRAKRRAATKR) the composition is skewed to basic residues.

It belongs to the universal ribosomal protein uL2 family. In terms of assembly, part of the 50S ribosomal subunit. Forms a bridge to the 30S subunit in the 70S ribosome.

Functionally, one of the primary rRNA binding proteins. Required for association of the 30S and 50S subunits to form the 70S ribosome, for tRNA binding and peptide bond formation. It has been suggested to have peptidyltransferase activity; this is somewhat controversial. Makes several contacts with the 16S rRNA in the 70S ribosome. This Korarchaeum cryptofilum (strain OPF8) protein is Large ribosomal subunit protein uL2.